A 180-amino-acid polypeptide reads, in one-letter code: UPF0398 protein YpsA (180 aa).

The protein belongs to the UPF0398 family.

This is UPF0398 protein YpsA (ypsA) from Bacillus subtilis (strain 168).